The primary structure comprises 1350 residues: Probable serine/threonine-protein kinase irlE (1350 aa).

N-linked (GlcNAc...) asparagine glycosylation is present at Asn-37. The helical transmembrane segment at 149–169 (FWEILASCYGTISFIKFFNIF) threads the bilayer. Positions 731–802 (EAELKEKFEI…NIQQNYENQH (72 aa)) form a coiled coil. Over residues 761-771 (LKKKNKLKKQK) the composition is skewed to basic residues. Disordered stretches follow at residues 761-795 (LKKKNKLKKQKNQQQQQQAKQQAQQQKQQHQQNIQ) and 807-864 (RKFN…TTNS). Residues 772–795 (NQQQQQQAKQQAQQQKQQHQQNIQ) show a composition bias toward low complexity. The segment covering 809 to 823 (FNQQTKGRPISPSSI) has biased composition (polar residues). Residues 824–864 (QNQNLNPTLLQNQNQTSNPTPNLESTKKATPTTTTTTTTNS) are compositionally biased toward low complexity. One can recognise a Protein kinase domain in the interval 903 to 1166 (KKESNILGRG…LSSVLKHPLF (264 aa)). ATP is bound by residues 909–917 (LGRGSNGTL) and Lys-932. The active-site Proton acceptor is the Asp-1034. A KEN domain is found at 1169-1346 (SLKKIKFLES…KNSIHFSNDT (178 aa)).

It belongs to the protein kinase superfamily. Ser/Thr protein kinase family.

The protein resides in the membrane. The enzyme catalyses L-seryl-[protein] + ATP = O-phospho-L-seryl-[protein] + ADP + H(+). The catalysed reaction is L-threonyl-[protein] + ATP = O-phospho-L-threonyl-[protein] + ADP + H(+). This is Probable serine/threonine-protein kinase irlE (irlE) from Dictyostelium discoideum (Social amoeba).